Reading from the N-terminus, the 195-residue chain is uncharacterized protein (195 aa).

The segment at 1–35 is disordered; the sequence is MASSSSAALRPFGTARLTPGRQTGRQTQQQISAPE. Residues 20-30 show a composition bias toward low complexity; it reads GRQTGRQTQQQ. The MSP domain occupies 76 to 184; sequence GVTVIPRVAR…PASINMALEA (109 aa).

This is an uncharacterized protein from Caenorhabditis elegans.